The chain runs to 50 residues: Small ribosomal subunit protein uS14 (50 aa).

Positions 15, 18, 33, and 36 each coordinate Zn(2+).

The protein belongs to the universal ribosomal protein uS14 family. Zinc-binding uS14 subfamily. In terms of assembly, part of the 30S ribosomal subunit. Requires Zn(2+) as cofactor.

Binds 16S rRNA, required for the assembly of 30S particles. This Methanococcoides burtonii (strain DSM 6242 / NBRC 107633 / OCM 468 / ACE-M) protein is Small ribosomal subunit protein uS14.